The primary structure comprises 308 residues: Maspardin (308 aa).

The 73-residue stretch at 87-159 folds into the AB hydrolase-1 domain; it reads FCDGFRKLLD…NSFWLMPAFM (73 aa). Ser304 bears the Phosphoserine mark.

This sequence belongs to the AB hydrolase superfamily. As to quaternary structure, interacts with CD4. Interacts with ALDH16A1.

It localises to the cytoplasm. Its function is as follows. May play a role as a negative regulatory factor in CD4-dependent T-cell activation. This is Maspardin (SPG21) from Pongo abelii (Sumatran orangutan).